The following is a 614-amino-acid chain: Chaperone protein DnaK (614 aa).

Position 176 is a phosphothreonine; by autocatalysis (threonine 176). The segment at tyrosine 576–lysine 614 is disordered. The segment covering glutamine 577 to alanine 589 has biased composition (low complexity). Over residues alanine 593–lysine 614 the composition is skewed to basic and acidic residues.

The protein belongs to the heat shock protein 70 family.

In terms of biological role, acts as a chaperone. The sequence is that of Chaperone protein DnaK from Fructilactobacillus sanfranciscensis (Lactobacillus sanfranciscensis).